We begin with the raw amino-acid sequence, 266 residues long: Thiazole synthase (266 aa).

Catalysis depends on Lys95, which acts as the Schiff-base intermediate with DXP. Residues Gly156, Ala182 to Gly183, and Asn204 to Thr205 each bind 1-deoxy-D-xylulose 5-phosphate.

The protein belongs to the ThiG family. In terms of assembly, homotetramer. Forms heterodimers with either ThiH or ThiS.

The protein localises to the cytoplasm. It catalyses the reaction [ThiS sulfur-carrier protein]-C-terminal-Gly-aminoethanethioate + 2-iminoacetate + 1-deoxy-D-xylulose 5-phosphate = [ThiS sulfur-carrier protein]-C-terminal Gly-Gly + 2-[(2R,5Z)-2-carboxy-4-methylthiazol-5(2H)-ylidene]ethyl phosphate + 2 H2O + H(+). It functions in the pathway cofactor biosynthesis; thiamine diphosphate biosynthesis. Functionally, catalyzes the rearrangement of 1-deoxy-D-xylulose 5-phosphate (DXP) to produce the thiazole phosphate moiety of thiamine. Sulfur is provided by the thiocarboxylate moiety of the carrier protein ThiS. In vitro, sulfur can be provided by H(2)S. This is Thiazole synthase from Shewanella denitrificans (strain OS217 / ATCC BAA-1090 / DSM 15013).